A 139-amino-acid polypeptide reads, in one-letter code: MIILVMSMRDVEKIIKGIIKDMNPRFKRKTLRELLSEEKPHVIINGKRHRIKRRELEFLKEIASEDLKIPIVLEVDSSLGGAIKISGKEEVKVISKILGKEIDIFSEKDVMYIYKPELKIVRKELPTTTQLIFKLSLFD.

Belongs to the UPF0216 family.

The protein is UPF0216 protein MJ1224 of Methanocaldococcus jannaschii (strain ATCC 43067 / DSM 2661 / JAL-1 / JCM 10045 / NBRC 100440) (Methanococcus jannaschii).